A 970-amino-acid polypeptide reads, in one-letter code: m7GpppN-mRNA hydrolase (970 aa).

The Nudix hydrolase domain maps to 101–228; it reads KSIPVRGAAI…IKYYLINSMM (128 aa). Residue Ser-116 is modified to Phosphoserine. A Nudix box motif is present at residues 134–155; the sequence is GKISKDENDIDCCIREVKEEIG. Residues Glu-149 and Glu-153 each coordinate Mn(2+). Residues 302-314 show a composition bias toward basic and acidic residues; that stretch reads QHLKEQSGEHNQQ. Disordered regions lie at residues 302 to 341, 417 to 465, 501 to 520, and 528 to 692; these read QHLK…ANNK, AVSQ…PKLK, SSQK…NDSV, and YEDF…LSST. The segment covering 315–334 has biased composition (low complexity); that stretch reads KDQQSSFSSQQQPSIFPSLS. Ser-439 carries the phosphoserine modification. Residues 528–539 show a composition bias toward acidic residues; the sequence is YEDFESSSDEEV. Over residues 560–576 the composition is skewed to basic and acidic residues; the sequence is SEKDSRRSQKEKPRNDA. Positions 577-590 are enriched in polar residues; it reads SKTNLNASAESNSV. Residues 596–608 are compositionally biased toward low complexity; it reads KSSPSTQSKQNSS. Residues 625–637 are compositionally biased toward acidic residues; it reads DAYEVFESSSDEE. A Phosphothreonine modification is found at Thr-677. Residues 677–691 are compositionally biased toward polar residues; it reads TESNKSINETVGLSS. Ser-679, Ser-682, Ser-751, Ser-771, Ser-773, and Ser-778 each carry phosphoserine. The interval 831-867 is disordered; it reads LKKNDSTGYPRTEGGPSSEMSTSMKRNDATNNQELDK. Positions 848-863 are enriched in polar residues; sequence SEMSTSMKRNDATNNQ.

This sequence belongs to the Nudix hydrolase family. DCP2 subfamily. In terms of assembly, component of the decapping complex composed of DCP1 and DCP2. Interacts with mRNA, LSM2, LSM4 and LSM8. Interacts with EDC3. Requires Mn(2+) as cofactor.

The protein resides in the cytoplasm. It localises to the P-body. The catalysed reaction is a 5'-end (N(7)-methyl 5'-triphosphoguanosine)-ribonucleoside in mRNA + H2O = N(7)-methyl-GDP + a 5'-end phospho-ribonucleoside in mRNA + 2 H(+). Functionally, catalytic component of the decapping complex necessary for the degradation of mRNAs, both in normal mRNA turnover and in nonsense-mediated mRNA decay. Removes the 7-methyl guanine cap structure from mRNA molecules, yielding a 5'-phosphorylated mRNA fragment and 7m-GDP. Decapping is the major pathway of mRNA degradation in yeast and occurs through deadenylation, decapping and subsequent 5' to 3' exonucleolytic decay of the transcript body. Blocks autophagy in nutrient-rich conditions by repressing the expression of ATG-related genes through degradation of their transcripts. The polypeptide is m7GpppN-mRNA hydrolase (Saccharomyces cerevisiae (strain ATCC 204508 / S288c) (Baker's yeast)).